The sequence spans 210 residues: Scoloptoxin SSD552 (210 aa).

The N-terminal stretch at 1-23 (MNILLSSTLFVLLMFQIIGSGMG) is a signal peptide.

In terms of processing, contains 3 disulfide bonds. In terms of tissue distribution, expressed by the venom gland.

The protein localises to the secreted. The protein is Scoloptoxin SSD552 of Scolopendra dehaani (Thai centipede).